The following is a 270-amino-acid chain: Phospholysine phosphohistidine inorganic pyrophosphate phosphatase (270 aa).

Asp-14 and Ser-16 together coordinate Mg(2+). Substrate is bound by residues 14–16 (DVS), 52–53 (TN), and Lys-187. Asp-212 provides a ligand contact to Mg(2+).

This sequence belongs to the HAD-like hydrolase superfamily. Mg(2+) serves as cofactor.

It localises to the cytoplasm. The protein resides in the nucleus. It catalyses the reaction diphosphate + H2O = 2 phosphate + H(+). Phosphatase that hydrolyzes imidodiphosphate, 3-phosphohistidine and 6-phospholysine. Has broad substrate specificity and can also hydrolyze inorganic diphosphate, but with lower efficiency. This Xenopus laevis (African clawed frog) protein is Phospholysine phosphohistidine inorganic pyrophosphate phosphatase (lhpp).